Reading from the N-terminus, the 279-residue chain is Putative pyruvate, phosphate dikinase regulatory protein (279 aa).

152-159 (GVSRTSKS) is an ADP binding site.

Belongs to the pyruvate, phosphate/water dikinase regulatory protein family. PDRP subfamily.

The enzyme catalyses N(tele)-phospho-L-histidyl/L-threonyl-[pyruvate, phosphate dikinase] + ADP = N(tele)-phospho-L-histidyl/O-phospho-L-threonyl-[pyruvate, phosphate dikinase] + AMP + H(+). It catalyses the reaction N(tele)-phospho-L-histidyl/O-phospho-L-threonyl-[pyruvate, phosphate dikinase] + phosphate + H(+) = N(tele)-phospho-L-histidyl/L-threonyl-[pyruvate, phosphate dikinase] + diphosphate. Bifunctional serine/threonine kinase and phosphorylase involved in the regulation of the pyruvate, phosphate dikinase (PPDK) by catalyzing its phosphorylation/dephosphorylation. In Anaplasma marginale (strain St. Maries), this protein is Putative pyruvate, phosphate dikinase regulatory protein.